A 90-amino-acid chain; its full sequence is UPF0386 protein Rru_A2144 (90 aa).

Belongs to the UPF0386 family.

The protein is UPF0386 protein Rru_A2144 of Rhodospirillum rubrum (strain ATCC 11170 / ATH 1.1.1 / DSM 467 / LMG 4362 / NCIMB 8255 / S1).